The sequence spans 184 residues: Interferon alpha-2 (184 aa).

The signal sequence occupies residues 1 to 23 (MALPFSLLMALVVLSCHSSCSLG). 2 disulfide bridges follow: Cys24–Cys122 and Cys52–Cys162.

The protein belongs to the alpha/beta interferon family. As to quaternary structure, interacts with IFNAR2.

The protein resides in the secreted. Produced by macrophages, IFN-alpha have antiviral activities. The polypeptide is Interferon alpha-2 (Equus caballus (Horse)).